Consider the following 203-residue polypeptide: CS5 fimbrial subunit (203 aa).

Positions 1–22 are cleaved as a signal peptide; the sequence is MKKNLLITSVLAMATVSGSVLA.

The protein localises to the fimbrium. Major subunit of fimbriae. Fimbriae (also called pili), are polar filaments radiating from the surface of the bacterium to a length of 0.5-1.5 micrometers and numbering 100-300 per cell. They enable bacteria to colonize the epithelium of specific host organs. The chain is CS5 fimbrial subunit from Escherichia coli.